The sequence spans 256 residues: Type III pantothenate kinase (256 aa).

7–14 contributes to the ATP binding site; it reads DIGNTNVV. Substrate is bound at residue 108-111; that stretch reads GADC. D110 (proton acceptor) is an active-site residue. Residue D130 participates in K(+) binding. T133 is an ATP binding site. Residue T185 coordinates substrate.

The protein belongs to the type III pantothenate kinase family. As to quaternary structure, homodimer. The cofactor is NH4(+). K(+) is required as a cofactor.

The protein localises to the cytoplasm. The enzyme catalyses (R)-pantothenate + ATP = (R)-4'-phosphopantothenate + ADP + H(+). The protein operates within cofactor biosynthesis; coenzyme A biosynthesis; CoA from (R)-pantothenate: step 1/5. In terms of biological role, catalyzes the phosphorylation of pantothenate (Pan), the first step in CoA biosynthesis. This chain is Type III pantothenate kinase, found in Bifidobacterium adolescentis (strain ATCC 15703 / DSM 20083 / NCTC 11814 / E194a).